Reading from the N-terminus, the 172-residue chain is Crossover junction endodeoxyribonuclease RuvC (172 aa).

Catalysis depends on residues Asp-7, Glu-68, and Asp-140. Mg(2+)-binding residues include Asp-7, Glu-68, and Asp-140.

This sequence belongs to the RuvC family. As to quaternary structure, homodimer which binds Holliday junction (HJ) DNA. The HJ becomes 2-fold symmetrical on binding to RuvC with unstacked arms; it has a different conformation from HJ DNA in complex with RuvA. In the full resolvosome a probable DNA-RuvA(4)-RuvB(12)-RuvC(2) complex forms which resolves the HJ. Requires Mg(2+) as cofactor.

It localises to the cytoplasm. It carries out the reaction Endonucleolytic cleavage at a junction such as a reciprocal single-stranded crossover between two homologous DNA duplexes (Holliday junction).. In terms of biological role, the RuvA-RuvB-RuvC complex processes Holliday junction (HJ) DNA during genetic recombination and DNA repair. Endonuclease that resolves HJ intermediates. Cleaves cruciform DNA by making single-stranded nicks across the HJ at symmetrical positions within the homologous arms, yielding a 5'-phosphate and a 3'-hydroxyl group; requires a central core of homology in the junction. The consensus cleavage sequence is 5'-(A/T)TT(C/G)-3'. Cleavage occurs on the 3'-side of the TT dinucleotide at the point of strand exchange. HJ branch migration catalyzed by RuvA-RuvB allows RuvC to scan DNA until it finds its consensus sequence, where it cleaves and resolves the cruciform DNA. This Polynucleobacter asymbioticus (strain DSM 18221 / CIP 109841 / QLW-P1DMWA-1) (Polynucleobacter necessarius subsp. asymbioticus) protein is Crossover junction endodeoxyribonuclease RuvC.